Here is a 307-residue protein sequence, read N- to C-terminus: Small ribosomal subunit biogenesis GTPase RsgA (307 aa).

The 158-residue stretch at 85 to 242 (RQDAWKTKLI…LIDSPGLQEF (158 aa)) folds into the CP-type G domain. Residues 135 to 138 (NKAD) and 184 to 192 (GQSGMGKST) contribute to the GTP site. The Zn(2+) site is built by Cys266, Cys271, His273, and Cys279.

It belongs to the TRAFAC class YlqF/YawG GTPase family. RsgA subfamily. As to quaternary structure, monomer. Associates with 30S ribosomal subunit, binds 16S rRNA. Requires Zn(2+) as cofactor.

It localises to the cytoplasm. One of several proteins that assist in the late maturation steps of the functional core of the 30S ribosomal subunit. Helps release RbfA from mature subunits. May play a role in the assembly of ribosomal proteins into the subunit. Circularly permuted GTPase that catalyzes slow GTP hydrolysis, GTPase activity is stimulated by the 30S ribosomal subunit. The sequence is that of Small ribosomal subunit biogenesis GTPase RsgA from Neisseria meningitidis serogroup C (strain 053442).